A 123-amino-acid chain; its full sequence is Large ribosomal subunit protein uL18 (123 aa).

It belongs to the universal ribosomal protein uL18 family. In terms of assembly, part of the 50S ribosomal subunit; part of the 5S rRNA/L5/L18/L25 subcomplex. Contacts the 5S and 23S rRNAs.

In terms of biological role, this is one of the proteins that bind and probably mediate the attachment of the 5S RNA into the large ribosomal subunit, where it forms part of the central protuberance. The polypeptide is Large ribosomal subunit protein uL18 (Desulforudis audaxviator (strain MP104C)).